Consider the following 407-residue polypeptide: MRGGLWQLGQSITRRLGQSDKKTIARRCYASEADLKKTVLYDFHVANGGKMVPFAGWSMPIQYKDSIMESTINCRENGSLFDVSHMCGLSLKGKDCVPFLEKLVVADVAGLRPGTGSLTVFTNEKGGAIDDSVITKVTDDHIYLVVNAGCRDKDLAHIEEHMKAFKAKGGDVSWHIYDERSLLALQGPLAGSTLQHLTKEDLSKMYFGDFRIIDINGSKCFLTRTGYTGEDGFEISVPSENAVDLAKAILEKSEGKVRLTGLGARDSLRLEAGLCLYGNDMEQHITPVEAGLTWAIGKRRRAEGGFLGADVILKQIADGPAIRRVGLFSTGPPARSHSEIQNEKGENIGEVTSGGFSPCLKKNIGMGYVKSGLHKPGTKLKIVIRGKTYEGSVTKMPFVPTKYYKPA.

Residues 1 to 29 constitute a mitochondrion transit peptide; it reads MRGGLWQLGQSITRRLGQSDKKTIARRCY. Substrate is bound by residues E234, R265, and Y403.

The protein belongs to the GcvT family. The glycine cleavage system is composed of four proteins: P, T, L and H.

The protein resides in the mitochondrion. It carries out the reaction N(6)-[(R)-S(8)-aminomethyldihydrolipoyl]-L-lysyl-[protein] + (6S)-5,6,7,8-tetrahydrofolate = N(6)-[(R)-dihydrolipoyl]-L-lysyl-[protein] + (6R)-5,10-methylene-5,6,7,8-tetrahydrofolate + NH4(+). In terms of biological role, the glycine cleavage system catalyzes the degradation of glycine. This is Aminomethyltransferase, mitochondrial (GDCST) from Flaveria pringlei.